The chain runs to 346 residues: MIKDNDNSKVALITGTSSNLGINIAYRLLEQLPSSTNVTLIVTSRTLPKVKEVITNINQYSKTKLNRTGQLEFDYLLVDFTDMVSVLSAYYDLNKKFKKIDYLFVNAAQGVYSGIDWVAATKEICRNPMEGVTNPTYKTQRVGVKSNDNMGLVFQANVFGPYYLIHKIKHLLQKGGRIIWISSLMSNPKYLSFNDLQLLKSPESYEGSKRLVDLMHFGTFKQLQSEYGIEQYLVQPGIFTSFSFFKFLNVFTYYSMLMLFYLARLFGSPSHNISGFIAANAPVTCALGNESQSVKVCSVSNRTGKEYLSYQEVDTTGSADISAYLEKLCHEWDLTLKDQIVNTRQP.

Positions 20, 43, and 49 each coordinate NADP(+). Active-site proton donor residues include S182 and Y205. 3 residues coordinate NADP(+): Y205, K209, and S241. K209 functions as the Lowers pKa of active site Tyr in the catalytic mechanism.

This sequence belongs to the short-chain dehydrogenases/reductases (SDR) family. ERG27 subfamily.

It carries out the reaction a 3beta-hydroxysteroid + NADP(+) = a 3-oxosteroid + NADPH + H(+). It functions in the pathway steroid biosynthesis; zymosterol biosynthesis; zymosterol from lanosterol: step 5/6. In terms of biological role, responsible for the reduction of the keto group on the C-3 of sterols. The sequence is that of 3-keto-steroid reductase (ERG27) from Debaryomyces hansenii (strain ATCC 36239 / CBS 767 / BCRC 21394 / JCM 1990 / NBRC 0083 / IGC 2968) (Yeast).